Reading from the N-terminus, the 247-residue chain is MSGHNKWSTIKHKKGAADAKRGKVFSKLIKEITIAARMGGGDPDANPRLRTAINAAKAENMPKDNWERAIKKGTGELEGVNYEEFQYEGYGPGGGAVLVESLTDNKNRAAAEIRHIFSKCGGSLGEAGCVAWMFDKKGYIVVNQSVTDEDTLMEIALEAGAEDVREAGDVFEVITQPDDYDAVKEAIDAAGIETEDASVTKLPQNTVEVTGKEAEQMVRLLQTLDDCDDVQNVYTSADIPDDAIGED.

Belongs to the TACO1 family.

It localises to the cytoplasm. This Desulfatibacillum aliphaticivorans protein is Probable transcriptional regulatory protein Dalk_2958.